The chain runs to 421 residues: MSKTHLTEQKFSDFALHPKVVEALEKKGFHNCTPIQALALPLTLAGRDVAGQAQTGTGKTMAFLTSTFHYLLSHPAIADRKVNQPRALIMAPTRELAVQIHADAEPLAEATGLKLGLAYGGDGYDKQLKVLESGVDILIGTTGRLIDYAKQNHINLGAIQVVVLDEADRMYDLGFIKDIRWLFRRMPPANQRLNMLFSATLSYRVRELAFEQMNNAEYIEVEPEQKTGHRIKEELFYPSNEEKMRLLQTLIEEEWPDRAIIFANTKHRCEEIWGHLAADGHRVGLLTGDVAQKKRLRILDEFTRGDLDILVATDVAARGLHIPAVTHVFNYDLPDDCEDYVHRIGRTGRAGASGHSISLACEEYALNLPAIETYIGHSIPVSKYNPDALMTDLPKPLRLTRPRTGNGPRRTGTPRNRRRSG.

A Q motif motif is present at residues 9–37 (QKFSDFALHPKVVEALEKKGFHNCTPIQA). The 180-residue stretch at 40-219 (LPLTLAGRDV…FEQMNNAEYI (180 aa)) folds into the Helicase ATP-binding domain. 53–60 (AQTGTGKT) is an ATP binding site. A DEAD box motif is present at residues 165–168 (DEAD). Residues 245-390 (RLLQTLIEEE…VSKYNPDALM (146 aa)) form the Helicase C-terminal domain. Positions 392-421 (DLPKPLRLTRPRTGNGPRRTGTPRNRRRSG) are disordered. Residues 402-414 (PRTGNGPRRTGTP) show a composition bias toward low complexity.

This sequence belongs to the DEAD box helicase family. RhlB subfamily. Component of the RNA degradosome, which is a multiprotein complex involved in RNA processing and mRNA degradation.

The protein localises to the cytoplasm. The catalysed reaction is ATP + H2O = ADP + phosphate + H(+). Its function is as follows. DEAD-box RNA helicase involved in RNA degradation. Has RNA-dependent ATPase activity and unwinds double-stranded RNA. This Escherichia coli O17:K52:H18 (strain UMN026 / ExPEC) protein is ATP-dependent RNA helicase RhlB.